A 672-amino-acid chain; its full sequence is DNA ligase (672 aa).

NAD(+) contacts are provided by residues 35–39, 84–85, and E116; these read DAEYD and SL. Residue K118 is the N6-AMP-lysine intermediate of the active site. R139, E179, K295, and K319 together coordinate NAD(+). Residues C413, C416, C431, and C436 each coordinate Zn(2+). One can recognise a BRCT domain in the interval 593 to 672; sequence PRSAPLTGKT…EEFLRLAGKI (80 aa).

The protein belongs to the NAD-dependent DNA ligase family. LigA subfamily. It depends on Mg(2+) as a cofactor. The cofactor is Mn(2+).

The catalysed reaction is NAD(+) + (deoxyribonucleotide)n-3'-hydroxyl + 5'-phospho-(deoxyribonucleotide)m = (deoxyribonucleotide)n+m + AMP + beta-nicotinamide D-nucleotide.. In terms of biological role, DNA ligase that catalyzes the formation of phosphodiester linkages between 5'-phosphoryl and 3'-hydroxyl groups in double-stranded DNA using NAD as a coenzyme and as the energy source for the reaction. It is essential for DNA replication and repair of damaged DNA. This Syntrophus aciditrophicus (strain SB) protein is DNA ligase.